Consider the following 147-residue polypeptide: 3-dehydroquinate dehydratase (147 aa).

The active-site Proton acceptor is Y23. N74, H80, and D87 together coordinate substrate. The active-site Proton donor is H100. Substrate-binding positions include 101–102 (LS) and R111.

The protein belongs to the type-II 3-dehydroquinase family. As to quaternary structure, homododecamer.

The catalysed reaction is 3-dehydroquinate = 3-dehydroshikimate + H2O. Its pathway is metabolic intermediate biosynthesis; chorismate biosynthesis; chorismate from D-erythrose 4-phosphate and phosphoenolpyruvate: step 3/7. In terms of biological role, catalyzes a trans-dehydration via an enolate intermediate. The chain is 3-dehydroquinate dehydratase from Clostridium botulinum (strain Loch Maree / Type A3).